The sequence spans 238 residues: Tyrosine recombinase XerD-like (238 aa).

Residues 1 to 75 enclose the Core-binding (CB) domain; sequence MKLPNEIEEY…SANQYFLFLY (75 aa). A Tyr recombinase domain is found at 90-238; it reads VQKKTQSSES…TITALEKYYR (149 aa). Catalysis depends on residues Lys-154 and Arg-204. The active-site O-(3'-phospho-DNA)-tyrosine intermediate is Tyr-236.

This sequence belongs to the 'phage' integrase family. XerD-like subfamily.

Its subcellular location is the cytoplasm. Its function is as follows. Putative tyrosine recombinase. Not involved in the cutting and rejoining of the recombining DNA molecules on dif(SL) site. This is Tyrosine recombinase XerD-like from Lactococcus lactis subsp. cremoris (strain SK11).